Consider the following 118-residue polypeptide: Putative pterin-4-alpha-carbinolamine dehydratase (118 aa).

Belongs to the pterin-4-alpha-carbinolamine dehydratase family.

It catalyses the reaction (4aS,6R)-4a-hydroxy-L-erythro-5,6,7,8-tetrahydrobiopterin = (6R)-L-erythro-6,7-dihydrobiopterin + H2O. This Pseudomonas aeruginosa (strain LESB58) protein is Putative pterin-4-alpha-carbinolamine dehydratase.